Reading from the N-terminus, the 217-residue chain is 8-oxoguanine DNA glycosylase/AP lyase (217 aa).

Residues Lys-138 and Asp-157 contribute to the active site.

The protein belongs to the type-2 OGG1 family.

The catalysed reaction is 2'-deoxyribonucleotide-(2'-deoxyribose 5'-phosphate)-2'-deoxyribonucleotide-DNA = a 3'-end 2'-deoxyribonucleotide-(2,3-dehydro-2,3-deoxyribose 5'-phosphate)-DNA + a 5'-end 5'-phospho-2'-deoxyribonucleoside-DNA + H(+). Catalyzes the excision of an oxidatively damaged form of guanine (7,8-dihydro-8-oxoguanine = 8-oxoG) from DNA. Also cleaves the DNA backbone at apurinic/apyrimidinic sites (AP sites). The sequence is that of 8-oxoguanine DNA glycosylase/AP lyase from Fusobacterium nucleatum subsp. nucleatum (strain ATCC 25586 / DSM 15643 / BCRC 10681 / CIP 101130 / JCM 8532 / KCTC 2640 / LMG 13131 / VPI 4355).